Consider the following 299-residue polypeptide: Transcription elongation factor A protein 2 (299 aa).

Residues Glu-5 to Ser-82 form the TFIIS N-terminal domain. A Glycyl lysine isopeptide (Lys-Gly) (interchain with G-Cter in ubiquitin) cross-link involves residue Lys-57. Residues Ser-59 and Ser-100 each carry the phosphoserine modification. Residues Ser-82 to Thr-127 form a disordered region. Positions Arg-87–Lys-101 are enriched in polar residues. The segment covering Asp-102–Pro-116 has biased composition (basic and acidic residues). In terms of domain architecture, TFIIS central spans Val-138–Thr-254. The TFIIS-type zinc finger occupies Asp-257 to Lys-297. 4 residues coordinate Zn(2+): Cys-261, Cys-264, Cys-289, and Cys-292.

The protein belongs to the TFS-II family. In terms of assembly, interacts with the basal transcription factor GTF2B. Interacts with REXO1. In terms of tissue distribution, testis and ovary specific. Specific to testicular germ cells.

It is found in the nucleus. Its function is as follows. Necessary for efficient RNA polymerase II transcription elongation past template-encoded arresting sites. The arresting sites in DNA have the property of trapping a certain fraction of elongating RNA polymerases that pass through, resulting in locked ternary complexes. Cleavage of the nascent transcript by S-II allows the resumption of elongation from the new 3'-terminus. In Mus musculus (Mouse), this protein is Transcription elongation factor A protein 2 (Tcea2).